Reading from the N-terminus, the 150-residue chain is UPF0178 protein Bcep1808_1605 (150 aa).

It belongs to the UPF0178 family.

This is UPF0178 protein Bcep1808_1605 from Burkholderia vietnamiensis (strain G4 / LMG 22486) (Burkholderia cepacia (strain R1808)).